Here is a 98-residue protein sequence, read N- to C-terminus: MALTKAEMAEHLFETLGMNKRVAKEMVESFFEEIRGALESGEQVKLSGFGNFDLRDKNQRPGRNPKTGEDIPISARRVVTFRPGQKLKTRVEAANTGK.

The segment at 49 to 70 (FGNFDLRDKNQRPGRNPKTGED) is disordered.

Belongs to the bacterial histone-like protein family. In terms of assembly, heterodimer of an alpha and a beta chain.

Functionally, this protein is one of the two subunits of integration host factor, a specific DNA-binding protein that functions in genetic recombination as well as in transcriptional and translational control. The sequence is that of Integration host factor subunit alpha from Shewanella baltica (strain OS223).